The following is a 517-amino-acid chain: Zinc finger protein AEBP2 (517 aa).

A disordered region spans residues 1–229 (MAAAITDMAD…DSEDSISSTI (229 aa)). A2 bears the N-acetylalanine mark. A phosphoserine mark is found at S18 and S24. Acidic residues predominate over residues 36-51 (PEEEEEEEEEEEEAEA). Over residues 61-78 (GGSGGGGGGGGGGVGGGE) the composition is skewed to gly residues. Residues 94 to 121 (GEDEDEEEDDEEEEDESSSSGGGEEESS) are compositionally biased toward acidic residues. A compositionally biased stretch (low complexity) spans 122–150 (AESLVGSSGGSSSDETRSLSPGAASSSSG). Phosphoserine is present on S141. The segment covering 152-163 (GDGKEGLEEPKG) has biased composition (basic and acidic residues). Gly residues-rich tracts occupy residues 166–175 (GSQGGGGGGS) and 185–196 (GDEGYGTGGGGS). S206, S210, and S211 each carry phosphoserine. An interaction with RBBP4 region spans residues 209–294 (MSSDGEPLSR…IHVDGQRGGV (86 aa)). The segment at 261–286 (YNCCWDQCQACFNSSPDLADHIRSIH) adopts a C2H2-type 1 zinc-finger fold. The segment at 300–322 (KGCKVYNTPSTSQSWLQRHMLTH) adopts a C2H2-type 2; degenerate zinc-finger fold. Residues 328–352 (FKCVVGGCNASFASQGGLARHVPTH) form a C2H2-type 3 zinc finger. The segment covering 352 to 365 (HFSQQNSSKVSSQP) has biased composition (polar residues). The segment at 352–394 (HFSQQNSSKVSSQPKAKEESPSKAGMNKRRKLKNKRRRSLPRP) is disordered. Residues 377 to 392 (MNKRRKLKNKRRRSLP) show a composition bias toward basic residues. The residue at position 390 (S390) is a Phosphoserine. The interaction with SUZ12 stretch occupies residues 407–478 (RHRAICFNLS…QLKTKVVHLS (72 aa)). Residues 495–517 (TMPQKRLKRTLIRKVFNLYLSKQ) form an important for nucleosome binding activity of the PRC2 complex region.

The protein belongs to the AEBP2/jing C2H2-type zinc-finger family. As to quaternary structure, self-associates. Associates with the PRC2 complex, which consists of the core components EED, EZH1 or EZH2, SUZ12, and RBBP4, and various combinations of accessory subunits including AEBP2, JARID2, PHF19, MTF2 and EPOP. Found in a monomeric PRC2.2 (class 2) complex consisting of at least SUZ12, RBBP4, AEBP2 and JARID2. Within the PRC2 complex, interacts directly with SUZ12; competes with PHF19 for SUZ12 binding. Interacts with EED, EZH2, and RBBP4. May also interact with RBBP7.

The protein resides in the nucleus. Functionally, acts as an accessory subunit for the core Polycomb repressive complex 2 (PRC2), which mediates histone H3K27 (H3K27me3) trimethylation on chromatin leading to transcriptional repression of the affected target gene. Plays a role in nucleosome localization of the PRC2 complex. In Homo sapiens (Human), this protein is Zinc finger protein AEBP2 (AEBP2).